The following is a 256-amino-acid chain: L-erythrulose-1-phosphate isomerase (256 aa).

Histidine 96 functions as the Electrophile in the catalytic mechanism. Glutamate 169 serves as the catalytic Proton acceptor. Substrate contacts are provided by glycine 175 and serine 212.

The protein belongs to the triosephosphate isomerase family. Homodimer.

The protein localises to the cytoplasm. The catalysed reaction is L-erythrulose 1-phosphate = D-erythrulose 4-phosphate. It participates in carbohydrate metabolism; erythritol degradation. Catalyzes the isomerization of D-erythrulose-4P to L-erythrulose-1P. In Brucella melitensis biotype 1 (strain ATCC 23456 / CCUG 17765 / NCTC 10094 / 16M), this protein is L-erythrulose-1-phosphate isomerase.